Reading from the N-terminus, the 259-residue chain is Insulin-induced gene 1 protein (259 aa).

Topologically, residues 1–66 (MPRLHDHVWS…ARPGSWHHDL (66 aa)) are cytoplasmic. The tract at residues 33–57 (PQGPGAPEPEPAPRGQREGTAGFSA) is disordered. Residues 67 to 89 (VQRSLVLFSFGVVLALVLNLLQI) form a helical membrane-spanning segment. Over 90–108 (QRNVTLFPDEVIATIFSSA) the chain is Extracellular. Residues 109–126 (WWVPPCCGTAAAVVGLLY) form a helical membrane-spanning segment. Residues 127–141 (PCIDSHLGEPHKFKR) lie on the Cytoplasmic side of the membrane. Residues lysine 138 and lysine 140 each participate in a glycyl lysine isopeptide (Lys-Gly) (interchain with G-Cter in ubiquitin) cross-link. The helical transmembrane segment at 142-164 (EWASVMRCIAVFVGINHASAKLD) threads the bilayer. Over 165–167 (FAN) the chain is Extracellular. A helical membrane pass occupies residues 168-186 (NVQLSLTLAALSLGLWWTF). Residues 187 to 191 (DRSRS) are Cytoplasmic-facing. At serine 189 the chain carries Phosphoserine. A helical membrane pass occupies residues 192–213 (GLGLGITIAFLATLITQFLVYN). Over 214 to 227 (GVYQYTSPDFLYIR) the chain is Extracellular. A helical transmembrane segment spans residues 228 to 245 (SWLPCIFFSGGVTVGNIG). The Cytoplasmic portion of the chain corresponds to 246–259 (RQLAMGVPEKPHSD). Positions 253–259 (PEKPHSD) match the KxHxx motif.

Belongs to the INSIG family. Interacts with SCAP; interaction is direct and only takes place in the presence of sterols; it prevents interaction between SCAP and the coat protein complex II (COPII). Associates with the SCAP-SREBP complex (composed of SCAP and SREBF1/SREBP1 or SREBF2/SREBP2); association is mediated via its interaction with SCAP and only takes place in the presence of sterols. Interaction with SCAP is mutually exclusive with PAQR3. Interacts with HMGCR (via its SSD); the interaction, accelerated by sterols, leads to the recruitment of HMGCR to AMFR/gp78 for its ubiquitination by the sterol-mediated ERAD pathway. Interacts with AMFR/gp78 (via its membrane domain); the interaction recruits HMCR at the ER membrane for its ubiquitination and degradation by the sterol-mediated ERAD pathway. Interacts with SOAT2/ACAT2; leading to promote recruitment of AMFR/gp78 and subsequent ubiquitination of SOAT2/ACAT2. Interacts with RNF139. Interacts with RNF145. In terms of processing, phosphorylation at Ser-189 by PCK1 reduces binding to oxysterol, disrupting the interaction between INSIG1 and SCAP, thereby promoting nuclear translocation of SREBP proteins (SREBF1/SREBP1 or SREBF2/SREBP2) and subsequent transcription of downstream lipogenesis-related genes. Post-translationally, ubiquitinated by AMFR/gp78 in response to sterol deprivation, leading to its degradation: when the SCAP-SREBP complex becomes dissociated from INSIG1, INSIG1 is then ubiquitinated and degraded in proteasomes. Although ubiquitination is required for rapid INSIG1 degradation, it is not required for release of the SCAP-SREBP complex. Ubiquitinated by RNF139. As to expression, highly expressed in liver and kidney.

The protein localises to the endoplasmic reticulum membrane. Functionally, oxysterol-binding protein that mediates feedback control of cholesterol synthesis by controlling both endoplasmic reticulum to Golgi transport of SCAP and degradation of HMGCR. Acts as a negative regulator of cholesterol biosynthesis by mediating the retention of the SCAP-SREBP complex in the endoplasmic reticulum, thereby blocking the processing of sterol regulatory element-binding proteins (SREBPs) SREBF1/SREBP1 and SREBF2/SREBP2. Binds oxysterol, including 25-hydroxycholesterol, regulating interaction with SCAP and retention of the SCAP-SREBP complex in the endoplasmic reticulum. In presence of oxysterol, interacts with SCAP, retaining the SCAP-SREBP complex in the endoplasmic reticulum, thereby preventing SCAP from escorting SREBF1/SREBP1 and SREBF2/SREBP2 to the Golgi. Sterol deprivation or phosphorylation by PCK1 reduce oxysterol-binding, disrupting the interaction between INSIG1 and SCAP, thereby promoting Golgi transport of the SCAP-SREBP complex, followed by processing and nuclear translocation of SREBF1/SREBP1 and SREBF2/SREBP2. Also regulates cholesterol synthesis by regulating degradation of HMGCR: initiates the sterol-mediated ubiquitin-mediated endoplasmic reticulum-associated degradation (ERAD) of HMGCR via recruitment of the reductase to the ubiquitin ligases AMFR/gp78 and/or RNF139. Also regulates degradation of SOAT2/ACAT2 when the lipid levels are low: initiates the ubiquitin-mediated degradation of SOAT2/ACAT2 via recruitment of the ubiquitin ligases AMFR/gp78. The polypeptide is Insulin-induced gene 1 protein (Rattus norvegicus (Rat)).